We begin with the raw amino-acid sequence, 350 residues long: Ribosomal RNA large subunit methyltransferase M (350 aa).

S-adenosyl-L-methionine is bound by residues 217–220 (APGG), aspartate 236, aspartate 256, and aspartate 272. Catalysis depends on lysine 301, which acts as the Proton acceptor.

The protein belongs to the class I-like SAM-binding methyltransferase superfamily. RNA methyltransferase RlmE family. RlmM subfamily. As to quaternary structure, monomer.

The protein localises to the cytoplasm. It carries out the reaction cytidine(2498) in 23S rRNA + S-adenosyl-L-methionine = 2'-O-methylcytidine(2498) in 23S rRNA + S-adenosyl-L-homocysteine + H(+). Its function is as follows. Catalyzes the 2'-O-methylation at nucleotide C2498 in 23S rRNA. This chain is Ribosomal RNA large subunit methyltransferase M, found in Teredinibacter turnerae (strain ATCC 39867 / T7901).